Reading from the N-terminus, the 464-residue chain is ATP synthase subunit beta (464 aa).

Position 152–159 (152–159 (GGAGVGKS)) interacts with ATP.

Belongs to the ATPase alpha/beta chains family. In terms of assembly, F-type ATPases have 2 components, CF(1) - the catalytic core - and CF(0) - the membrane proton channel. CF(1) has five subunits: alpha(3), beta(3), gamma(1), delta(1), epsilon(1). CF(0) has three main subunits: a(1), b(2) and c(9-12). The alpha and beta chains form an alternating ring which encloses part of the gamma chain. CF(1) is attached to CF(0) by a central stalk formed by the gamma and epsilon chains, while a peripheral stalk is formed by the delta and b chains.

It is found in the cell membrane. It carries out the reaction ATP + H2O + 4 H(+)(in) = ADP + phosphate + 5 H(+)(out). In terms of biological role, produces ATP from ADP in the presence of a proton gradient across the membrane. The catalytic sites are hosted primarily by the beta subunits. This is ATP synthase subunit beta from Protochlamydia amoebophila (strain UWE25).